The primary structure comprises 362 residues: Chorismate synthase (362 aa).

2 residues coordinate NADP(+): R48 and R54. FMN contacts are provided by residues 131–133, 243–244, G287, 302–306, and R328; these read RSS, NA, and KPTSS.

This sequence belongs to the chorismate synthase family. As to quaternary structure, homotetramer. FMNH2 is required as a cofactor.

It catalyses the reaction 5-O-(1-carboxyvinyl)-3-phosphoshikimate = chorismate + phosphate. The protein operates within metabolic intermediate biosynthesis; chorismate biosynthesis; chorismate from D-erythrose 4-phosphate and phosphoenolpyruvate: step 7/7. Its function is as follows. Catalyzes the anti-1,4-elimination of the C-3 phosphate and the C-6 proR hydrogen from 5-enolpyruvylshikimate-3-phosphate (EPSP) to yield chorismate, which is the branch point compound that serves as the starting substrate for the three terminal pathways of aromatic amino acid biosynthesis. This reaction introduces a second double bond into the aromatic ring system. The chain is Chorismate synthase from Rhodopseudomonas palustris (strain BisB18).